A 989-amino-acid chain; its full sequence is DEAD-box ATP-dependent RNA helicase 45 (989 aa).

2 stretches are compositionally biased toward basic and acidic residues: residues 1–39 and 64–101; these read MLEKSKSRKENDRKDRDRSKKENGRRDTTEMRSRVKRCD and RDSKRRGEDKGRGRRERDRDRGKYLKRDRERREREKEK. Disordered regions lie at residues 1–248 and 305–330; these read MLEK…AADE and QGEDSDSDYSEPKSDDDPSLDEDDEE. Residues 88–182 are a coiled coil; sequence LKRDRERRER…ELKRQNEEAQ (95 aa). The residue at position 119 (serine 119) is a Phosphoserine. Basic and acidic residues predominate over residues 134–179; it reads SRHGDDDVEKKTRDEQVEDEQKQLAEEVEKRRRRVQEWQELKRQNE. Serine 200 carries the phosphoserine modification. Residues 203 to 222 are compositionally biased toward basic and acidic residues; sequence EVKSDSEMDVDRDTKLENGG. The span at 230-239 shows a compositional bias: polar residues; it reads ENETAVTVSE. A compositionally biased stretch (acidic residues) spans 321–330; the sequence is DPSLDEDDEE. A Q motif motif is present at residues 396-424; sequence QFWHQTGLTSKILDTLKKLNYEKPMPIQA. The Helicase ATP-binding domain occupies 427–605; sequence LPIIMSGRDC…RKVLNKPVEI (179 aa). 440 to 447 lines the ATP pocket; that stretch reads AKTGSGKT. The DEAD box motif lies at 553-556; it reads DEAD. In terms of domain architecture, Helicase C-terminal spans 590 to 748; sequence QVETLARKVL…PVPDDVKAVA (159 aa).

Belongs to the DEAD box helicase family. DDX46/PRP5 subfamily.

The enzyme catalyses ATP + H2O = ADP + phosphate + H(+). The polypeptide is DEAD-box ATP-dependent RNA helicase 45 (RH45) (Arabidopsis thaliana (Mouse-ear cress)).